We begin with the raw amino-acid sequence, 846 residues long: Sucrose synthase 6 (846 aa).

The segment at 276–755 (CVFTVVIFSI…GLQRIYECYT (480 aa)) is GT-B glycosyltransferase.

This sequence belongs to the glycosyltransferase 1 family. Plant sucrose synthase subfamily.

The catalysed reaction is an NDP-alpha-D-glucose + D-fructose = a ribonucleoside 5'-diphosphate + sucrose + H(+). Its function is as follows. Sucrose-cleaving enzyme that provides UDP-glucose and fructose for various metabolic pathways. In Oryza sativa subsp. japonica (Rice), this protein is Sucrose synthase 6 (SUS6).